A 218-amino-acid polypeptide reads, in one-letter code: Probable transaldolase (218 aa).

Residue lysine 87 is the Schiff-base intermediate with substrate of the active site.

This sequence belongs to the transaldolase family. Type 3B subfamily.

The protein resides in the cytoplasm. It catalyses the reaction D-sedoheptulose 7-phosphate + D-glyceraldehyde 3-phosphate = D-erythrose 4-phosphate + beta-D-fructose 6-phosphate. It participates in carbohydrate degradation; pentose phosphate pathway; D-glyceraldehyde 3-phosphate and beta-D-fructose 6-phosphate from D-ribose 5-phosphate and D-xylulose 5-phosphate (non-oxidative stage): step 2/3. Its function is as follows. Transaldolase is important for the balance of metabolites in the pentose-phosphate pathway. The protein is Probable transaldolase of Bacteroides thetaiotaomicron (strain ATCC 29148 / DSM 2079 / JCM 5827 / CCUG 10774 / NCTC 10582 / VPI-5482 / E50).